The following is a 495-amino-acid chain: ATP synthase subunit beta, chloroplastic (495 aa).

172-179 (GGAGVGKT) lines the ATP pocket.

The protein belongs to the ATPase alpha/beta chains family. F-type ATPases have 2 components, CF(1) - the catalytic core - and CF(0) - the membrane proton channel. CF(1) has five subunits: alpha(3), beta(3), gamma(1), delta(1), epsilon(1). CF(0) has four main subunits: a(1), b(1), b'(1) and c(9-12).

Its subcellular location is the plastid. It localises to the chloroplast thylakoid membrane. The catalysed reaction is ATP + H2O + 4 H(+)(in) = ADP + phosphate + 5 H(+)(out). In terms of biological role, produces ATP from ADP in the presence of a proton gradient across the membrane. The catalytic sites are hosted primarily by the beta subunits. The chain is ATP synthase subunit beta, chloroplastic from Bowiea volubilis (Climbing onion).